We begin with the raw amino-acid sequence, 431 residues long: Enolase (431 aa).

Q167 is a (2R)-2-phosphoglycerate binding site. The Proton donor role is filled by E209. Mg(2+)-binding residues include D246, E290, and D317. Residues K342, R371, S372, and K393 each contribute to the (2R)-2-phosphoglycerate site. Catalysis depends on K342, which acts as the Proton acceptor.

This sequence belongs to the enolase family. Component of the RNA degradosome, a multiprotein complex involved in RNA processing and mRNA degradation. Mg(2+) serves as cofactor.

It localises to the cytoplasm. The protein localises to the secreted. It is found in the cell surface. The enzyme catalyses (2R)-2-phosphoglycerate = phosphoenolpyruvate + H2O. Its pathway is carbohydrate degradation; glycolysis; pyruvate from D-glyceraldehyde 3-phosphate: step 4/5. Catalyzes the reversible conversion of 2-phosphoglycerate (2-PG) into phosphoenolpyruvate (PEP). It is essential for the degradation of carbohydrates via glycolysis. This is Enolase from Enterobacter sp. (strain 638).